A 315-amino-acid polypeptide reads, in one-letter code: Gamma-hemolysin component C (315 aa).

The signal sequence occupies residues 1–29 (MLKNKILTTTLSVSLLAPLANPLLENAKA).

The protein belongs to the aerolysin family. Toxicity requires sequential binding and synergistic association of a class S and a class F component which form heterooligomeric complexes. HlgC (class S) associates with HlgB (class F) thus forming an CB toxin.

Functionally, toxin that seems to act by forming pores in the membrane of the cell. Has a hemolytic and a leucotoxic activity. In Staphylococcus aureus (strain COL), this protein is Gamma-hemolysin component C (hlgC).